The following is a 330-amino-acid chain: NmrA-like family domain-containing oxidoreductase notO (330 aa).

NADP(+)-binding positions include 12–17 (VGIGSL), 38–42 (HHFAQ), 59–60 (RS), 80–82 (IEA), and 160–163 (LGGG). The helical transmembrane segment at 12 to 32 (VGIGSLPAGLVALFMGATSGI) threads the bilayer. Positions 158–202 (SVLGGGLESPLNEQDLDLRDPKNWTFWSSSMHSGTMGTLTLERIA) are interaction with ASS1. 2 N-linked (GlcNAc...) asparagine glycosylation sites follow: Asn180 and Asn207.

Belongs to the NmrA-type oxidoreductase family.

It localises to the membrane. Functionally, nmrA-like family domain-containing oxidoreductase; part of the gene cluster that mediates the biosynthesis of notoamide, a fungal indole alkaloid that belongs to a family of natural products containing a characteristic bicyclo[2.2.2]diazaoctane core. The first step of notoamide biosynthesis involves coupling of L-proline and L-tryptophan by the bimodular NRPS notE, to produce cyclo-L-tryptophan-L-proline called brevianamide F. The reverse prenyltransferase notF then acts as a deoxybrevianamide E synthase and converts brevianamide F to deoxybrevianamide E via reverse prenylation at C-2 of the indole ring leading to the bicyclo[2.2.2]diazaoctane core. Deoxybrevianamide E is further hydroxylated at C-6 of the indole ring, likely catalyzed by the cytochrome P450 monooxygenase notG, to yield 6-hydroxy-deoxybrevianamide E. 6-hydroxy-deoxybrevianamide E is a specific substrate of the prenyltransferase notC for normal prenylation at C-7 to produce 6-hydroxy-7-prenyl-deoxybrevianamide, also called notoamide S. As the proposed pivotal branching point in notoamide biosynthesis, notoamide S can be diverted to notoamide E through an oxidative pyran ring closure putatively catalyzed by either notH cytochrome P450 monooxygenase or the notD FAD-linked oxidoreductase. This step would be followed by an indole 2,3-epoxidation-initiated pinacol-like rearrangement catalyzed by the notB FAD-dependent monooxygenase leading to the formation of notoamide C and notoamide D. On the other hand notoamide S is converted to notoamide T by notH (or notD), a bifunctional oxidase that also functions as the intramolecular Diels-Alderase responsible for generation of (+)-notoamide T. To generate antipodal (-)-notoaminide T, notH' (or notD') in Aspergillus versicolor is expected to catalyze a Diels-Alder reaction leading to the opposite stereochemistry. The remaining oxidoreductase notD (or notH) likely catalyzes the oxidative pyran ring formation to yield (+)-stephacidin A. The FAD-dependent monooxygenase notI is highly similar to notB and is predicted to catalyze a similar conversion from (+)-stephacidin A to (-)-notoamide B via the 2,3-epoxidation of (+)-stephacidin A followed by a pinacol-type rearrangement. Finally, it remains unclear which enzyme could be responsible for the final hydroxylation steps leading to notoamide A and sclerotiamide. The function of notO in the notoamide biosynthesis has not been determined yet. The polypeptide is NmrA-like family domain-containing oxidoreductase notO (Aspergillus sp. (strain MF297-2)).